Reading from the N-terminus, the 297-residue chain is Small ribosomal subunit protein uS9m (297 aa).

Residues 278 to 297 (VERKKPGKRKARKMPTWVKR) form a disordered region.

It belongs to the universal ribosomal protein uS9 family.

It localises to the mitochondrion. The protein is Small ribosomal subunit protein uS9m (MRPS9) of Kluyveromyces lactis (strain ATCC 8585 / CBS 2359 / DSM 70799 / NBRC 1267 / NRRL Y-1140 / WM37) (Yeast).